Here is a 142-residue protein sequence, read N- to C-terminus: Large ribosomal subunit protein uL11 (142 aa).

This sequence belongs to the universal ribosomal protein uL11 family. In terms of assembly, part of the ribosomal stalk of the 50S ribosomal subunit. Interacts with L10 and the large rRNA to form the base of the stalk. L10 forms an elongated spine to which L12 dimers bind in a sequential fashion forming a multimeric L10(L12)X complex. In terms of processing, one or more lysine residues are methylated.

In terms of biological role, forms part of the ribosomal stalk which helps the ribosome interact with GTP-bound translation factors. The polypeptide is Large ribosomal subunit protein uL11 (Aeromonas hydrophila subsp. hydrophila (strain ATCC 7966 / DSM 30187 / BCRC 13018 / CCUG 14551 / JCM 1027 / KCTC 2358 / NCIMB 9240 / NCTC 8049)).